A 283-amino-acid chain; its full sequence is Thymidylate synthase (283 aa).

Residue Arg-22 coordinates dUMP. Cys-160 serves as the catalytic Nucleophile. DUMP contacts are provided by residues 180–183 (RSAD), Asn-191, and 221–223 (HIY). Position 183 (Asp-183) interacts with (6R)-5,10-methylene-5,6,7,8-tetrahydrofolate. (6R)-5,10-methylene-5,6,7,8-tetrahydrofolate is bound at residue Ser-282.

This sequence belongs to the thymidylate synthase family. Bacterial-type ThyA subfamily. In terms of assembly, homodimer.

The protein localises to the cytoplasm. It carries out the reaction dUMP + (6R)-5,10-methylene-5,6,7,8-tetrahydrofolate = 7,8-dihydrofolate + dTMP. Its pathway is pyrimidine metabolism; dTTP biosynthesis. In terms of biological role, catalyzes the reductive methylation of 2'-deoxyuridine-5'-monophosphate (dUMP) to 2'-deoxythymidine-5'-monophosphate (dTMP) while utilizing 5,10-methylenetetrahydrofolate (mTHF) as the methyl donor and reductant in the reaction, yielding dihydrofolate (DHF) as a by-product. This enzymatic reaction provides an intracellular de novo source of dTMP, an essential precursor for DNA biosynthesis. This Glaesserella parasuis serovar 5 (strain SH0165) (Haemophilus parasuis) protein is Thymidylate synthase.